Consider the following 421-residue polypeptide: Subtilisin-like protease 2 (421 aa).

The first 16 residues, M1–G16, serve as a signal peptide directing secretion. The propeptide occupies D17–A122. The region spanning Q36–L121 is the Inhibitor I9 domain. The 291-residue stretch at R131–Y421 folds into the Peptidase S8 domain. D169 acts as the Charge relay system in catalysis. A glycan (N-linked (GlcNAc...) asparagine) is linked at N192. H201 serves as the catalytic Charge relay system. N-linked (GlcNAc...) asparagine glycosylation is found at N248, N261, and N348. Catalysis depends on S357, which acts as the Charge relay system. A glycan (N-linked (GlcNAc...) asparagine) is linked at N388.

Belongs to the peptidase S8 family.

The protein resides in the secreted. Secreted subtilisin-like serine protease with keratinolytic activity that contributes to pathogenicity. The chain is Subtilisin-like protease 2 (SUB2) from Trichophyton rubrum (Athlete's foot fungus).